Here is a 755-residue protein sequence, read N- to C-terminus: uncharacterized protein (755 aa).

9 consecutive transmembrane segments (helical) span residues 46 to 66 (LGLG…GGLY), 70 to 90 (LKTI…GTIV), 93 to 113 (GWGL…YLAV), 118 to 138 (GAMV…NVST), 143 to 163 (FTSL…IWPF), 411 to 431 (IAHL…IFVL), 446 to 466 (LLGT…IQDP), 482 to 502 (ALLR…ALIL), and 514 to 534 (ALLS…GLAF).

The protein belongs to the YccS/YhfK family.

It is found in the cell membrane. This is an uncharacterized protein from Synechocystis sp. (strain ATCC 27184 / PCC 6803 / Kazusa).